The following is a 99-amino-acid chain: N(2)-fixation sustaining protein CowN (99 aa).

Belongs to the CowN family.

Is required to sustain N(2)-dependent growth in the presence of low levels of carbon monoxide (CO). Probably acts by protecting the N(2) fixation ability of the nitrogenase complex, which is inactivated in the presence of CO. The polypeptide is N(2)-fixation sustaining protein CowN (Magnetococcus marinus (strain ATCC BAA-1437 / JCM 17883 / MC-1)).